We begin with the raw amino-acid sequence, 388 residues long: Succinate--CoA ligase [ADP-forming] subunit beta (388 aa).

In terms of domain architecture, ATP-grasp spans 9–244 (KQLFAEYGLP…PSQEDEREAH (236 aa)). ATP-binding positions include lysine 46, 53–55 (GRG), glutamate 99, threonine 102, and glutamate 107. 2 residues coordinate Mg(2+): asparagine 199 and aspartate 213. Residues asparagine 264 and 321–323 (GIV) each bind substrate.

Belongs to the succinate/malate CoA ligase beta subunit family. Heterotetramer of two alpha and two beta subunits. Mg(2+) serves as cofactor.

The enzyme catalyses succinate + ATP + CoA = succinyl-CoA + ADP + phosphate. The catalysed reaction is GTP + succinate + CoA = succinyl-CoA + GDP + phosphate. The protein operates within carbohydrate metabolism; tricarboxylic acid cycle; succinate from succinyl-CoA (ligase route): step 1/1. Functionally, succinyl-CoA synthetase functions in the citric acid cycle (TCA), coupling the hydrolysis of succinyl-CoA to the synthesis of either ATP or GTP and thus represents the only step of substrate-level phosphorylation in the TCA. The beta subunit provides nucleotide specificity of the enzyme and binds the substrate succinate, while the binding sites for coenzyme A and phosphate are found in the alpha subunit. The polypeptide is Succinate--CoA ligase [ADP-forming] subunit beta (Saccharophagus degradans (strain 2-40 / ATCC 43961 / DSM 17024)).